The primary structure comprises 231 residues: Ribonuclease HII (231 aa).

Residues 38–227 (ELVAGGDEAG…IKSFYGQLKL (190 aa)) enclose the RNase H type-2 domain. The a divalent metal cation site is built by D44, E45, and D136.

This sequence belongs to the RNase HII family. The cofactor is Mn(2+). Mg(2+) serves as cofactor.

Its subcellular location is the cytoplasm. It carries out the reaction Endonucleolytic cleavage to 5'-phosphomonoester.. Endonuclease that specifically degrades the RNA of RNA-DNA hybrids. In Carboxydothermus hydrogenoformans (strain ATCC BAA-161 / DSM 6008 / Z-2901), this protein is Ribonuclease HII.